Consider the following 411-residue polypeptide: Serine--tRNA ligase (411 aa).

226 to 228 (TSE) provides a ligand contact to L-serine. 257–259 (RKE) is a binding site for ATP. E280 contacts L-serine. An ATP-binding site is contributed by 344 to 347 (EISS). Residue S379 participates in L-serine binding.

This sequence belongs to the class-II aminoacyl-tRNA synthetase family. Type-1 seryl-tRNA synthetase subfamily. As to quaternary structure, homodimer. The tRNA molecule binds across the dimer.

It is found in the cytoplasm. The enzyme catalyses tRNA(Ser) + L-serine + ATP = L-seryl-tRNA(Ser) + AMP + diphosphate + H(+). It carries out the reaction tRNA(Sec) + L-serine + ATP = L-seryl-tRNA(Sec) + AMP + diphosphate + H(+). It functions in the pathway aminoacyl-tRNA biosynthesis; selenocysteinyl-tRNA(Sec) biosynthesis; L-seryl-tRNA(Sec) from L-serine and tRNA(Sec): step 1/1. In terms of biological role, catalyzes the attachment of serine to tRNA(Ser). Is also able to aminoacylate tRNA(Sec) with serine, to form the misacylated tRNA L-seryl-tRNA(Sec), which will be further converted into selenocysteinyl-tRNA(Sec). This Campylobacter jejuni (strain RM1221) protein is Serine--tRNA ligase.